Consider the following 886-residue polypeptide: MIIREIRLQNFLSHEDTTVKFEGSINVIIGNNGAGKSSIIDGILFGLFKRTNRDIGKNEELIKKGKKSGQVSIKFEINGDTYLIDRNVGETSRDTISLLKEGKIITLARQSTTVNNKIKEILGFDHKILMSTTIIGQGSVESVFSDFPEVMKELLKINKLEMLRESNGPIHSLIKVLTDRIRSLQSIKDILKREEAEIDRLKKEIEEIKVKLENIEREAKEKEDELNQYNTEFNRIKEIKVQYDILSGELSVVNKKIEEIALRLKDFEEKEKRYNKIETEVKELDENREKINTISSFKSILVQIDSLKSQINVVENDLKRKKEKLKRKKELEEKEKQYEEIEKRKKELEEKEKQYEEIEKRLTYVLKNIERQKNEIEKLNYVDTQDLENKIKDVSDRINQIDNELKGLLDRRGDLNGRKEQTLKIYNNLNSIEDDRCPICGRPLDSEHKAKIREEIKVQLLELNKQITALQARINSLIKEREELEATRNKLQLELQKRSKEKGIYEAKLKELQRLEEEKNKLQNEILSLLSYHQEFENIAEKEKELIDYHEEYLKNSDILEEDIQEQEQRLNELNSKLSELEKSYNDYKAKYQFLPADLKSLVSLEERIRRRISELEKLKIEYERLKEEITRMKGLKEEYEKLKEEEDALLNRISELGYSEKRYKQLEEIIDKLSKILSGIEADKGKIKGSLEEKIKNIEEKERNIEELRNKMNEESKLNLGISKLQKLREVLDNKHLQSHIMNIVRNQIENNVNEVIAKFDLSFSAVEIDFVGKSELYVYTASGQKIHINALSGGERISIALALRLAIAKALMNQFSTLILDEPTVNLDEYRRKELIDVIRSAIEIVPQIILVTHDQELIQAGDYIIRVEKKGDTSKVEVSSYDR.

Residues 32–38 (NGAGKSS) and Gln-137 each bind ATP. Coiled coils occupy residues 181–240 (IRSL…KEIK) and 320–416 (RKKE…GDLN). The 99-residue stretch at 391 to 489 (IKDVSDRINQ…EREELEATRN (99 aa)) folds into the Zinc-hook domain. Zn(2+) contacts are provided by Cys-437 and Cys-440. Coiled coils occupy residues 450–657 (AKIR…ISEL) and 682–718 (EADK…EESK).

Belongs to the SMC family. RAD50 subfamily. Homodimer. Forms a heterotetramer composed of two Mre11 subunits and two Rad50 subunits. Interacts with Mre11 and HerA. Zn(2+) is required as a cofactor.

Functionally, part of the Rad50/Mre11 complex, which is involved in the early steps of DNA double-strand break (DSB) repair. The complex may facilitate opening of the processed DNA ends to aid in the recruitment of HerA and NurA. Rad50 controls the balance between DNA end bridging and DNA resection via ATP-dependent structural rearrangements of the Rad50/Mre11 complex. This Sulfolobus acidocaldarius (strain ATCC 33909 / DSM 639 / JCM 8929 / NBRC 15157 / NCIMB 11770) protein is DNA double-strand break repair Rad50 ATPase.